The chain runs to 92 residues: Plasmid copy control protein CopR (92 aa).

Residues 1–27 show a composition bias toward basic and acidic residues; sequence MELAFRESLKKMRGTKSKEKFSQELEM. Disordered stretches follow at residues 1–40 and 63–92; these read MELAFRESLKKMRGTKSKEKFSQELEMSRSNYSRIESGKS and IPNEPTEPEPETEQVTLELEMEEEKSNDFV. Residues 9-62 form the HTH cro/C1-type domain; the sequence is LKKMRGTKSKEKFSQELEMSRSNYSRIESGKSDPTIKTLEQIVKLTNSTLVVDL. A DNA-binding region (H-T-H motif) is located at residues 20–39; sequence KFSQELEMSRSNYSRIESGK.

In terms of biological role, involved in copy control of plasmid pIP501. This is Plasmid copy control protein CopR (copR) from Streptococcus agalactiae.